Consider the following 259-residue polypeptide: Ferritin-3, chloroplastic (259 aa).

The N-terminal 49 residues, 1 to 49, are a transit peptide targeting the chloroplast; the sequence is MLLKAASTFSLLNIHGEKKDISPLFSSSSSISSPVSSGKSGNLSFPLRA. The tract at residues 50–88 is extension peptide (EP); sequence SKSSTTTTSTLSGVVFEPFEEVKKEMDLVPSGQQLSLAR. The 154-residue stretch at 89-242 folds into the Ferritin-like diiron domain; it reads HLYSPECEAA…EYVSQLRRLG (154 aa). Fe cation contacts are provided by glutamate 106, glutamate 141, histidine 144, glutamate 190, and glutamine 224.

This sequence belongs to the ferritin family. In terms of assembly, oligomer of 24 subunits. There are two types of subunits: L (light) chain and H (heavy) chain. The major chain can be light or heavy, depending on the species and tissue type. The functional molecule forms a roughly spherical shell with a diameter of 12 nm and contains a central cavity into which the insoluble mineral iron core is deposited.

It is found in the plastid. The protein localises to the chloroplast. The catalysed reaction is 4 Fe(2+) + O2 + 4 H(+) = 4 Fe(3+) + 2 H2O. Functionally, stores iron in a soluble, non-toxic, readily available form. Important for iron homeostasis. Has ferroxidase activity. Iron is taken up in the ferrous form and deposited as ferric hydroxides after oxidation. The chain is Ferritin-3, chloroplastic (FER3) from Arabidopsis thaliana (Mouse-ear cress).